Here is a 128-residue protein sequence, read N- to C-terminus: MAATMETDEQQRIRFQLELEFVQCLANPNYLNFLAQRGYFKDKPFVNYMKYLLYWKEPEYAKYLKYPQCLHMLELLQYEHFRKELVNAQCAKFIDEQQILHWQHYSRKRVRLQQALAEQQQQNNTSGK.

It belongs to the Mediator complex subunit 31 family. As to quaternary structure, component of the Mediator complex.

The protein localises to the nucleus. Its function is as follows. Component of the Mediator complex, a coactivator involved in the regulated transcription of nearly all RNA polymerase II-dependent genes. Mediator functions as a bridge to convey information from gene-specific regulatory proteins to the basal RNA polymerase II transcription machinery. Mediator is recruited to promoters by direct interactions with regulatory proteins and serves as a scaffold for the assembly of a functional preinitiation complex with RNA polymerase II and the general transcription factors. The protein is Mediator of RNA polymerase II transcription subunit 31-A (med31-a) of Xenopus laevis (African clawed frog).